The chain runs to 874 residues: Alanine--tRNA ligase (874 aa).

The Zn(2+) site is built by histidine 564, histidine 568, cysteine 665, and histidine 669.

It belongs to the class-II aminoacyl-tRNA synthetase family. Requires Zn(2+) as cofactor.

The protein localises to the cytoplasm. The catalysed reaction is tRNA(Ala) + L-alanine + ATP = L-alanyl-tRNA(Ala) + AMP + diphosphate. Catalyzes the attachment of alanine to tRNA(Ala) in a two-step reaction: alanine is first activated by ATP to form Ala-AMP and then transferred to the acceptor end of tRNA(Ala). Also edits incorrectly charged Ser-tRNA(Ala) and Gly-tRNA(Ala) via its editing domain. The chain is Alanine--tRNA ligase from Paraburkholderia phytofirmans (strain DSM 17436 / LMG 22146 / PsJN) (Burkholderia phytofirmans).